Here is a 612-residue protein sequence, read N- to C-terminus: Rhotekin-2 (612 aa).

In terms of domain architecture, REM-1 spans 3-79 (IKRKKIRESA…LRSQMGESNT (77 aa)). The region spanning 285 to 392 (DEAMMGFLNQ…WMEAFWQHFY (108 aa)) is the PH domain. Disordered regions lie at residues 483–530 (RNKP…SDKE) and 574–612 (ENKAELDTGTQEPIKPVPTPRQKSLREKLDPRVWLQSQV). The segment covering 486-498 (PPLLSSDDPSTSS) has biased composition (low complexity).

In Xenopus laevis (African clawed frog), this protein is Rhotekin-2 (rtkn2).